We begin with the raw amino-acid sequence, 429 residues long: Mannose-6-phosphate isomerase (429 aa).

The Zn(2+) site is built by Gln109, His111, Glu136, and His281. Residue Arg300 is part of the active site.

This sequence belongs to the mannose-6-phosphate isomerase type 1 family. It depends on Zn(2+) as a cofactor.

It localises to the cytoplasm. It catalyses the reaction D-mannose 6-phosphate = D-fructose 6-phosphate. The protein operates within nucleotide-sugar biosynthesis; GDP-alpha-D-mannose biosynthesis; alpha-D-mannose 1-phosphate from D-fructose 6-phosphate: step 1/2. In terms of biological role, involved in the synthesis of the GDP-mannose and dolichol-phosphate-mannose required for a number of critical mannosyl transfer reactions. This Eremothecium gossypii (strain ATCC 10895 / CBS 109.51 / FGSC 9923 / NRRL Y-1056) (Yeast) protein is Mannose-6-phosphate isomerase (PMI1).